Reading from the N-terminus, the 359-residue chain is Small ribosomal subunit protein mS22 (359 aa).

The protein belongs to the mitochondrion-specific ribosomal protein mS22 family. Component of the mitochondrial ribosome small subunit (28S) which comprises a 12S rRNA and about 30 distinct proteins.

Its subcellular location is the mitochondrion. This is Small ribosomal subunit protein mS22 (MRPS22) from Bos taurus (Bovine).